We begin with the raw amino-acid sequence, 244 residues long: Probable cytokinin riboside 5'-monophosphate phosphoribohydrolase LOGL2 (244 aa).

Substrate-binding positions include Glu-91, 109–110 (RK), and 126–132 (GYGTLEE).

The protein belongs to the LOG family.

It carries out the reaction N(6)-(dimethylallyl)adenosine 5'-phosphate + H2O = N(6)-dimethylallyladenine + D-ribose 5-phosphate. The catalysed reaction is 9-ribosyl-trans-zeatin 5'-phosphate + H2O = trans-zeatin + D-ribose 5-phosphate. Its function is as follows. Cytokinin-activating enzyme working in the direct activation pathway. Phosphoribohydrolase that converts inactive cytokinin nucleotides to the biologically active free-base forms. This chain is Probable cytokinin riboside 5'-monophosphate phosphoribohydrolase LOGL2 (LOGL2), found in Oryza sativa subsp. japonica (Rice).